The following is a 117-amino-acid chain: DNA-binding protein VNG_2008H (117 aa).

The disordered stretch occupies residues 1-59; it reads MSGNPDDDRLEELRQRKKEQLKQQQQGGDAEREAQQQQAQQAEQQKQAMLKQNLTDGAR. The span at 11–21 shows a compositional bias: basic and acidic residues; sequence EELRQRKKEQL. A compositionally biased stretch (low complexity) spans 35–48; it reads QQQQAQQAEQQKQA.

Belongs to the PDCD5 family.

This Halobacterium salinarum (strain ATCC 700922 / JCM 11081 / NRC-1) (Halobacterium halobium) protein is DNA-binding protein VNG_2008H.